The chain runs to 475 residues: Amino acid permease 8 (475 aa).

The segment at 1–22 is disordered; the sequence is MDAYNNPSAVESGDAAVKSVDD. Residues 1 to 31 lie on the Cytoplasmic side of the membrane; the sequence is MDAYNNPSAVESGDAAVKSVDDDGREKRTGT. The next 2 membrane-spanning stretches (helical) occupy residues 32–52 and 53–73; these read FWTA…LSLA and WAIA…FAII. Residues 74–120 lie on the Cytoplasmic side of the membrane; that stretch reads TYYTSTLLADCYRSPDSITGTRNYNYMGVVRSYLGGKKVQLCGVAQY. Residues 121–141 form a helical membrane-spanning segment; the sequence is VNLVGVTIGYTITASISLVAI. Residues 142 to 157 lie on the Extracellular side of the membrane; sequence GKSNCYHDKGHKAKCS. Residues 158 to 178 traverse the membrane as a helical segment; that stretch reads VSNYPYMAAFGIVQIILSQLP. At 179 to 185 the chain is on the cytoplasmic side; sequence NFHKLSF. A helical membrane pass occupies residues 186–206; that stretch reads LSIIAAVMSFSYASIGIGLAI. Over 207–236 the chain is Extracellular; the sequence is ATVASGKIGKTELTGTVIGVDVTASEKVWK. A helical membrane pass occupies residues 237–257; sequence LFQAIGDIAFSYAFTTILIEI. Over 258–276 the chain is Cytoplasmic; the sequence is QDTLRSSPPENKVMKRASL. The helical transmembrane segment at 277-297 threads the bilayer; the sequence is VGVSTTTVFYILCGCIGYAAF. At 298 to 314 the chain is on the extracellular side; the sequence is GNQAPGDFLTDFGFYEP. The helical transmembrane segment at 315–335 threads the bilayer; that stretch reads YWLIDFANACIALHLIGAYQV. Residues 336-378 lie on the Cytoplasmic side of the membrane; sequence YAQPFFQFVEENCNKKWPQSNFINKEYSSKVPLLGKCRVNLFR. Residues 379–398 form a helical membrane-spanning segment; that stretch reads LVWRTCYVVLTTFVAMIFPF. Residues 399–401 are Extracellular-facing; it reads FNA. Residues 402 to 424 form a helical membrane-spanning segment; it reads ILGLLGAFAFWPLTVYFPVAMHI. The Cytoplasmic segment spans residues 425–441; that stretch reads AQAKVKKYSRRWLALNL. Residues 442 to 462 traverse the membrane as a helical segment; sequence LVLVCLIVSALAAVGSIIGLI. Topologically, residues 463–475 are extracellular; sequence NSVKSYKPFKNLD.

This sequence belongs to the amino acid/polyamine transporter 2 family. Amino acid/auxin permease (AAAP) (TC 2.A.18.2) subfamily. As to expression, expressed in flower buds, siliques, developing seeds and funiculi.

Its subcellular location is the cell membrane. Functionally, amino acid-proton symporter. Stereospecific transporter with a broad specificity for glutamate, aspartate and neutral and acidic amino acids. The polypeptide is Amino acid permease 8 (AAP8) (Arabidopsis thaliana (Mouse-ear cress)).